Reading from the N-terminus, the 708-residue chain is Potassium-transporting ATPase ATP-binding subunit 2 (708 aa).

Residues 1–23 form a disordered region; the sequence is MRSPSRLPHETRDSRQRTPKTDM. Over residues 7-23 the composition is skewed to basic and acidic residues; it reads LPHETRDSRQRTPKTDM. A run of 4 helical transmembrane segments spans residues 49-69, 84-104, 235-255, and 283-303; these read MFIV…PNLF, GLIT…EAVA, IALT…VATM, and SIAI…GGLL. The 4-aspartylphosphate intermediate role is filled by D339. ATP-binding positions include D376, E380, 407–414, and K426; that span reads FSAKTRMS. Residues D549 and D553 each coordinate Mg(2+). A run of 3 helical transmembrane segments spans residues 619–639, 645–665, and 683–703; these read FAIL…IMGL, AIIS…PLAL, and IFIY…LIDV.

It belongs to the cation transport ATPase (P-type) (TC 3.A.3) family. Type IA subfamily. As to quaternary structure, the system is composed of three essential subunits: KdpA, KdpB and KdpC.

It localises to the cell inner membrane. It carries out the reaction K(+)(out) + ATP + H2O = K(+)(in) + ADP + phosphate + H(+). Its function is as follows. Part of the high-affinity ATP-driven potassium transport (or Kdp) system, which catalyzes the hydrolysis of ATP coupled with the electrogenic transport of potassium into the cytoplasm. This subunit is responsible for energy coupling to the transport system and for the release of the potassium ions to the cytoplasm. This is Potassium-transporting ATPase ATP-binding subunit 2 from Nostoc sp. (strain PCC 7120 / SAG 25.82 / UTEX 2576).